A 195-amino-acid chain; its full sequence is Myelin-associated neurite-outgrowth inhibitor (195 aa).

At 1–18 (MNPVYSPASSGVPYANPK) the chain is on the cytoplasmic side. A helical membrane pass occupies residues 19–43 (GIGYPAGFPVGYAAAAPAYSPSMYP). Residues 44 to 143 (GANPAFPSGY…APPIPPPRPN (100 aa)) are Extracellular-facing. A helical transmembrane segment spans residues 144-163 (GVTMGMVGGTTMAMSAGTLL). The Cytoplasmic segment spans residues 164–195 (TTHSPTPVAPHPSMPTYRQPATPTYSYVPPQW).

The protein belongs to the FAM168 family.

The protein localises to the cytoplasm. The protein resides in the perinuclear region. It localises to the cell membrane. It is found in the cell projection. Its subcellular location is the axon. Functionally, inhibitor of neuronal axonal outgrowth. This chain is Myelin-associated neurite-outgrowth inhibitor (fam168b), found in Danio rerio (Zebrafish).